The sequence spans 464 residues: 3-isopropylmalate dehydratase large subunit (464 aa).

[4Fe-4S] cluster-binding residues include C337, C397, and C400.

This sequence belongs to the aconitase/IPM isomerase family. LeuC type 1 subfamily. As to quaternary structure, heterodimer of LeuC and LeuD. It depends on [4Fe-4S] cluster as a cofactor.

The catalysed reaction is (2R,3S)-3-isopropylmalate = (2S)-2-isopropylmalate. It participates in amino-acid biosynthesis; L-leucine biosynthesis; L-leucine from 3-methyl-2-oxobutanoate: step 2/4. Its function is as follows. Catalyzes the isomerization between 2-isopropylmalate and 3-isopropylmalate, via the formation of 2-isopropylmaleate. The polypeptide is 3-isopropylmalate dehydratase large subunit (Bacillus thuringiensis (strain Al Hakam)).